Consider the following 198-residue polypeptide: Ribonuclease HII (198 aa).

An RNase H type-2 domain is found at 10 to 198 (QLVAGVDEVG…PVKRALGLAS (189 aa)). A divalent metal cation-binding residues include aspartate 16, glutamate 17, and aspartate 108.

It belongs to the RNase HII family. Mn(2+) is required as a cofactor. Requires Mg(2+) as cofactor.

It localises to the cytoplasm. The catalysed reaction is Endonucleolytic cleavage to 5'-phosphomonoester.. Its function is as follows. Endonuclease that specifically degrades the RNA of RNA-DNA hybrids. The polypeptide is Ribonuclease HII (Shigella dysenteriae serotype 1 (strain Sd197)).